Here is a 278-residue protein sequence, read N- to C-terminus: Small ribosomal subunit protein uS3 (278 aa).

Residues Ile38–Lys106 form the KH type-2 domain. A disordered region spans residues Arg213 to Gly278. The segment covering Gln214–Val223 has biased composition (low complexity). A compositionally biased stretch (basic and acidic residues) spans Arg232 to Gly253. Positions Glu259–Gly278 are enriched in low complexity.

The protein belongs to the universal ribosomal protein uS3 family. Part of the 30S ribosomal subunit. Forms a tight complex with proteins S10 and S14.

Functionally, binds the lower part of the 30S subunit head. Binds mRNA in the 70S ribosome, positioning it for translation. The protein is Small ribosomal subunit protein uS3 of Nocardioides sp. (strain ATCC BAA-499 / JS614).